The sequence spans 218 residues: Large ribosomal subunit protein uL3 (218 aa).

This sequence belongs to the universal ribosomal protein uL3 family. Part of the 50S ribosomal subunit. Forms a cluster with proteins L14 and L19.

In terms of biological role, one of the primary rRNA binding proteins, it binds directly near the 3'-end of the 23S rRNA, where it nucleates assembly of the 50S subunit. This is Large ribosomal subunit protein uL3 from Rhodococcus jostii (strain RHA1).